The chain runs to 882 residues: MKIIINNDFPVAKVGADQITTLVSAKVHSCIYRPRLSIADGAAPRVCLYRAPPGYGKTVALAFEWLRHRTAGRPAVWLSLRASSYSEFDICAEIIEQLETFEMVKFSRVREGVSKPALLRDLASSLWQSTSNNEIETLVCLDNINHDLDLPLLHALMEFMLNTPKNIRFAVAGNTIKGFSQLKLAGAMREYTEKDLAFSAEEAVALAEAESVLGVPEEQIETLVQEVEGWPALVVFLLKRELPAKHISAVVEVDNYFRDEIFEAIPERYRVFLANSSLLDFVTPDQYNYVFKCVNGVSCIKYLSTNYMLLRHVSGEPAQFTLHPVLRNFLREITWTENPAKRSYLLKRAAFWHWRRGEYQYAIRISLRANDCRWAVSMSERIILDLSFRQGEIDALRQWLLELPKQAWHQKPIVLISYAWVLYFSQQGARAEKLIKDLSSQSDKKNKWQEKEWLQLVLAIGKATKDEMLSSEELCNKWISLFGDSNAVGKGAALTCLAFIFASEYRFAELEKVLAQAQAVNKFAKQNFAFGWLYVARFQQALASGKMGWARQIITQARTDSRAQMMESEFTSKMFDALELELHYELRCLDTSEEKLSKILEFISNHGVTDVFFSVCRAVSAWRLGRSDLNGSIEILEWAKAHAVEKNLPRLEVMSQIEIYQRLVCQGITGINNLKTLEDHKIFSGQHSAPLKARLLLVQSLVLSRDRNFHSAAHRALLAIQQARKINAGQLEVRGLLCLAGAQAGAGDLKKAQLNIVYAVEIAKQLQCFQTVLDEVCLIERIIPASCEAFTAVNLDQAIGAFSLPRIVEIGKSAENKADALLTRKQIAVLRLVKEGCSNKQIATNMHVTEDAIKWHMRKIFATLNVVNRTQATIEAERQGII.

51–58 (APPGYGKT) contributes to the ATP binding site. The region spanning 815-880 (ENKADALLTR…QATIEAERQG (66 aa)) is the HTH luxR-type domain. The segment at residues 839–858 (NKQIATNMHVTEDAIKWHMR) is a DNA-binding region (H-T-H motif).

It functions in the pathway hydrocarbon metabolism; alkane degradation. This protein activates the expression of alkBFGHJKL operon in the presence of alkanes. In Ectopseudomonas oleovorans (Pseudomonas oleovorans), this protein is HTH-type transcriptional regulator AlkS (alkS).